Here is a 399-residue protein sequence, read N- to C-terminus: Tryptophan synthase beta chain (399 aa).

An N6-(pyridoxal phosphate)lysine modification is found at Lys92.

This sequence belongs to the TrpB family. Tetramer of two alpha and two beta chains. Requires pyridoxal 5'-phosphate as cofactor.

The catalysed reaction is (1S,2R)-1-C-(indol-3-yl)glycerol 3-phosphate + L-serine = D-glyceraldehyde 3-phosphate + L-tryptophan + H2O. Its pathway is amino-acid biosynthesis; L-tryptophan biosynthesis; L-tryptophan from chorismate: step 5/5. The beta subunit is responsible for the synthesis of L-tryptophan from indole and L-serine. This Legionella pneumophila (strain Corby) protein is Tryptophan synthase beta chain.